Here is a 340-residue protein sequence, read N- to C-terminus: UPF0284 protein Saci_0020 (340 aa).

It belongs to the UPF0284 family.

In Sulfolobus acidocaldarius (strain ATCC 33909 / DSM 639 / JCM 8929 / NBRC 15157 / NCIMB 11770), this protein is UPF0284 protein Saci_0020.